A 516-amino-acid polypeptide reads, in one-letter code: Bifunctional pantoate ligase/cytidylate kinase (516 aa).

The segment at 1 to 279 is pantoate--beta-alanine ligase; the sequence is MVRKIFQTNA…CGSTRLIDHT (279 aa). 29–36 lines the ATP pocket; the sequence is MGGLHPGH. His36 serves as the catalytic Proton donor. (R)-pantoate is bound at residue Gln64. Gln64 is a binding site for beta-alanine. Position 153–156 (153–156) interacts with ATP; sequence GEKD. Position 159 (Gln159) interacts with (R)-pantoate. 190–193 provides a ligand contact to ATP; it reads YSSR. Positions 280 to 516 are cytidylate kinase; it reads FLMHRKPIIA…PEEVWPTPNS (237 aa).

The protein in the N-terminal section; belongs to the pantothenate synthetase family. This sequence in the C-terminal section; belongs to the cytidylate kinase family. Type 1 subfamily.

It is found in the cytoplasm. The catalysed reaction is (R)-pantoate + beta-alanine + ATP = (R)-pantothenate + AMP + diphosphate + H(+). It carries out the reaction CMP + ATP = CDP + ADP. It catalyses the reaction dCMP + ATP = dCDP + ADP. It participates in cofactor biosynthesis; (R)-pantothenate biosynthesis; (R)-pantothenate from (R)-pantoate and beta-alanine: step 1/1. Functionally, catalyzes the condensation of pantoate with beta-alanine in an ATP-dependent reaction via a pantoyl-adenylate intermediate. Catalyzes the transfer of a phosphate group from ATP to either CMP or dCMP to form CDP or dCDP and ADP, respectively. The sequence is that of Bifunctional pantoate ligase/cytidylate kinase from Prochlorococcus marinus (strain NATL1A).